The primary structure comprises 804 residues: E3 ubiquitin-protein ligase RNF10 (804 aa).

Composition is skewed to low complexity over residues 1-31 (MPQS…SGSS), 78-90 (SNQS…QKSK), and 104-113 (SKPFSSSSNG). Residues 1–134 (MPQSSPSAAA…AEFSPAQFSG (134 aa)) are disordered. Serine 5 carries the phosphoserine modification. Residue serine 110 is modified to Phosphoserine. A compositionally biased stretch (basic and acidic residues) spans 114-124 (GRRDEVAEAQR). Residue serine 128 is modified to Phosphoserine. The RING-type zinc-finger motif lies at 225–267 (CPICLYPPTAAKITRCGHIFCWACILHYLSLSEKTWSKCPICY). 3 disordered regions span residues 589–611 (DIEK…ERRI), 646–665 (DSAL…LSPL), and 715–804 (KADG…VHTK). Over residues 601–611 (AREERRRERRI) the composition is skewed to basic and acidic residues. The segment covering 646–655 (DSALGPTSTE) has biased composition (polar residues). A compositionally biased stretch (basic and acidic residues) spans 715–729 (KADGWPKTAPKKDDN). The segment covering 795 to 804 (LFSTSVVHTK) has biased composition (polar residues).

It belongs to the RNF10 family. Interacts with MEOX2.

The protein localises to the cytoplasm. The protein resides in the nucleus. The enzyme catalyses S-ubiquitinyl-[E2 ubiquitin-conjugating enzyme]-L-cysteine + [acceptor protein]-L-lysine = [E2 ubiquitin-conjugating enzyme]-L-cysteine + N(6)-ubiquitinyl-[acceptor protein]-L-lysine.. It functions in the pathway protein modification; protein ubiquitination. Its function is as follows. E3 ubiquitin-protein ligase that catalyzes monoubiquitination of 40S ribosomal proteins RPS2/us5 and RPS3/us3 in response to ribosome stalling. Part of a ribosome quality control that takes place when ribosomes have stalled during translation initiation (iRQC): RNF10 acts by mediating monoubiquitination of RPS2/us5 and RPS3/us3, promoting their degradation by the proteasome. Also promotes ubiquitination of 40S ribosomal proteins in response to ribosome stalling during translation elongation. The action of RNF10 in iRQC is counteracted by USP10. May also act as a transcriptional factor involved in the regulation of MAG (Myelin-associated glycoprotein) expression. Acts as a regulator of Schwann cell differentiation and myelination. The protein is E3 ubiquitin-protein ligase RNF10 of Mus musculus (Mouse).